The primary structure comprises 108 residues: Protein YcgL (108 aa).

In terms of domain architecture, YcgL spans 12-96 (MFCVIYRSSK…SPEDLLKQHL (85 aa)).

This is Protein YcgL from Shigella dysenteriae serotype 1 (strain Sd197).